The primary structure comprises 424 residues: 3-phosphoshikimate 1-carboxyvinyltransferase (424 aa).

3 residues coordinate 3-phosphoshikimate: Lys21, Ser22, and Arg26. Lys21 is a phosphoenolpyruvate binding site. Positions 92 and 120 each coordinate phosphoenolpyruvate. Residues Ser163, Ser164, Gln165, Ser191, Asp306, and Lys333 each contribute to the 3-phosphoshikimate site. Gln165 contributes to the phosphoenolpyruvate binding site. The active-site Proton acceptor is Asp306. Residues Arg337, Arg379, and Lys405 each contribute to the phosphoenolpyruvate site.

Belongs to the EPSP synthase family. Monomer.

The protein resides in the cytoplasm. It carries out the reaction 3-phosphoshikimate + phosphoenolpyruvate = 5-O-(1-carboxyvinyl)-3-phosphoshikimate + phosphate. It functions in the pathway metabolic intermediate biosynthesis; chorismate biosynthesis; chorismate from D-erythrose 4-phosphate and phosphoenolpyruvate: step 6/7. Functionally, catalyzes the transfer of the enolpyruvyl moiety of phosphoenolpyruvate (PEP) to the 5-hydroxyl of shikimate-3-phosphate (S3P) to produce enolpyruvyl shikimate-3-phosphate and inorganic phosphate. The chain is 3-phosphoshikimate 1-carboxyvinyltransferase from Clostridium perfringens (strain ATCC 13124 / DSM 756 / JCM 1290 / NCIMB 6125 / NCTC 8237 / Type A).